The primary structure comprises 491 residues: Ketol-acid reductoisomerase (NADP(+)) (491 aa).

The 195-residue stretch at 14–208 (LDQLGRCRFM…GGHRAGVLES (195 aa)) folds into the KARI N-terminal Rossmann domain. NADP(+)-binding positions include 45–48 (CGAQ), Arg-68, Arg-76, Ser-78, and 108–110 (DKQ). His-132 is an active-site residue. Gly-158 serves as a coordination point for NADP(+). 2 consecutive KARI C-terminal knotted domains span residues 209–344 (SFVA…NAPK) and 345–485 (YEGK…MTDM). Residues Asp-217, Glu-221, Glu-389, and Glu-393 each contribute to the Mg(2+) site. Ser-414 provides a ligand contact to substrate.

The protein belongs to the ketol-acid reductoisomerase family. Mg(2+) is required as a cofactor.

The enzyme catalyses (2R)-2,3-dihydroxy-3-methylbutanoate + NADP(+) = (2S)-2-acetolactate + NADPH + H(+). It catalyses the reaction (2R,3R)-2,3-dihydroxy-3-methylpentanoate + NADP(+) = (S)-2-ethyl-2-hydroxy-3-oxobutanoate + NADPH + H(+). It participates in amino-acid biosynthesis; L-isoleucine biosynthesis; L-isoleucine from 2-oxobutanoate: step 2/4. The protein operates within amino-acid biosynthesis; L-valine biosynthesis; L-valine from pyruvate: step 2/4. In terms of biological role, involved in the biosynthesis of branched-chain amino acids (BCAA). Catalyzes an alkyl-migration followed by a ketol-acid reduction of (S)-2-acetolactate (S2AL) to yield (R)-2,3-dihydroxy-isovalerate. In the isomerase reaction, S2AL is rearranged via a Mg-dependent methyl migration to produce 3-hydroxy-3-methyl-2-ketobutyrate (HMKB). In the reductase reaction, this 2-ketoacid undergoes a metal-dependent reduction by NADPH to yield (R)-2,3-dihydroxy-isovalerate. This Pasteurella multocida (strain Pm70) protein is Ketol-acid reductoisomerase (NADP(+)).